The primary structure comprises 93 residues: Beta-defensin 128 (93 aa).

An N-terminal signal peptide occupies residues 1 to 18; sequence MKLFLVLIILLFEVLTDG. 3 cysteine pairs are disulfide-bonded: cysteine 24–cysteine 52, cysteine 32–cysteine 46, and cysteine 36–cysteine 53.

The protein belongs to the beta-defensin family.

The protein resides in the secreted. Functionally, has antibacterial activity. This Macaca fascicularis (Crab-eating macaque) protein is Beta-defensin 128 (DEFB128).